We begin with the raw amino-acid sequence, 95 residues long: DNA-directed RNA polymerase subunit Rpo11 (95 aa).

The protein belongs to the archaeal Rpo11/eukaryotic RPB11/RPC19 RNA polymerase subunit family. As to quaternary structure, part of the RNA polymerase complex.

It is found in the cytoplasm. The catalysed reaction is RNA(n) + a ribonucleoside 5'-triphosphate = RNA(n+1) + diphosphate. DNA-dependent RNA polymerase (RNAP) catalyzes the transcription of DNA into RNA using the four ribonucleoside triphosphates as substrates. This is DNA-directed RNA polymerase subunit Rpo11 from Pyrococcus horikoshii (strain ATCC 700860 / DSM 12428 / JCM 9974 / NBRC 100139 / OT-3).